The primary structure comprises 414 residues: GLABROUS1 enhancer-binding protein-like 3 (414 aa).

Disordered stretches follow at residues 36–57 (QLRTTTTRTTTTRTTPLSLSSS) and 167–191 (QAKDVPSGEPETNDVPCEEQDDRDV). Low complexity predominate over residues 38-50 (RTTTTRTTTTRTT). A non-canonical leucine-zipper region spans residues 382–403 (LINEWKALFVDEQRLCVKKLTF).

The protein belongs to the GeBP family. As to quaternary structure, homo- and heterodimers. Interacts with GEBP, GPL1 and GPL2. Interacts with GEBP. In terms of tissue distribution, expressed in the apical meristem and young leaf primordia. Detected in the vascular tissues of rosette leaves, in primary and secondary roots and at the base of flowers and siliques.

The protein localises to the nucleus. Functionally, probable transcription factor. Involved in stress responses. Plays a repressive role in cell expansion by counteracting the positive role of CPR5 in this process, but does not regulate cell proliferation or endoreduplication. The sequence is that of GLABROUS1 enhancer-binding protein-like 3 from Arabidopsis thaliana (Mouse-ear cress).